Consider the following 174-residue polypeptide: MTYVVFLLSVMFVMGFVGFSSKPSPIYGGLGLIVSGGVGCGIVLSFGGSFLGLMMFLIYLGGMLVVFGYTTAMATEEYPETWGSNVMILGMFVLGVLMEVGLVVYMVMSDGVEIVVDFKNMGDWVVFEGDEVGLIREDSMGVAALYSYGSWLMVVAGWSLFVSIFIVIEITRGA.

The next 5 helical transmembrane spans lie at 1–21 (MTYV…GFSS), 24–44 (SPIY…GIVL), 46–66 (FGGS…MLVV), 86–106 (VMIL…VVYM), and 151–171 (WLMV…IEIT).

This sequence belongs to the complex I subunit 6 family. As to quaternary structure, core subunit of respiratory chain NADH dehydrogenase (Complex I) which is composed of 45 different subunits.

It is found in the mitochondrion inner membrane. The enzyme catalyses a ubiquinone + NADH + 5 H(+)(in) = a ubiquinol + NAD(+) + 4 H(+)(out). Functionally, core subunit of the mitochondrial membrane respiratory chain NADH dehydrogenase (Complex I) which catalyzes electron transfer from NADH through the respiratory chain, using ubiquinone as an electron acceptor. Essential for the catalytic activity and assembly of complex I. In Oryctolagus cuniculus (Rabbit), this protein is NADH-ubiquinone oxidoreductase chain 6 (MT-ND6).